The sequence spans 725 residues: Consortin (725 aa).

Disordered regions lie at residues 1–72, 103–124, 296–353, 375–397, and 485–510; these read MDDS…LNNN, GKDK…AKKI, LLVS…SLSV, TQSS…CEDD, and QQPD…ENVL. Over 1-664 the chain is Cytoplasmic; that stretch reads MDDSDTPTYY…LDQDEVGGGS (664 aa). Positions 63–72 are enriched in polar residues; it reads VSEQDSLNNN. The segment covering 109–121 has biased composition (basic residues); sequence PGKRSPRSKKGTA. Over residues 300–314 the composition is skewed to basic and acidic residues; that stretch reads EDPKEGGATTKESES. Polar residues-rich tracts occupy residues 343-353 and 375-388; these read DVQTDSPSLSV and TQSS…SGPD. Residues 665–685 traverse the membrane as a helical segment; it reads CILLVLLCIATVFLSVGGTAL. Residues 686–725 lie on the Extracellular side of the membrane; the sequence is YCTFGDMESPVCTDFADNMDFYYTKLLQGVAELKHWIYLS.

Belongs to the CNST family. In terms of assembly, interacts with connexins GJA1/CX43, GJB1/CX32, GJB2/CX26, GJB3/CX31, GJB6/CX30 and GJC1/CX45. Also interacts with GGA1 and GGA2. Does not interact with PANX1.

It is found in the cell membrane. The protein localises to the golgi apparatus. The protein resides in the trans-Golgi network membrane. Its subcellular location is the cytoplasmic vesicle. It localises to the secretory vesicle. Its function is as follows. Required for targeting of connexins to the plasma membrane. This is Consortin (CNST) from Homo sapiens (Human).